The following is a 306-amino-acid chain: Fe-S cluster assembly protein dre2 (306 aa).

Residues 21–150 are N-terminal SAM-like domain; sequence NVTQKRSLLL…EKPQYQEAAV (130 aa). Residues 151 to 196 are linker; it reads PLRFGANKRKNKISPEPVKIESVGFVDNYDDDELINEDDLLDEEDL. Positions 206, 218, 221, and 223 each coordinate [2Fe-2S] cluster. Residues 206 to 223 form a fe-S binding site A region; sequence CQPETAKKRRRACKDCTC. C269, C272, C280, and C283 together coordinate [4Fe-4S] cluster. Short sequence motifs (cx2C motif) lie at residues 269-272 and 280-283; these read CNSC and CASC. Residues 269–283 form a fe-S binding site B region; the sequence is CNSCSLGDAFRCASC.

Belongs to the anamorsin family. As to quaternary structure, monomer. Interacts with tah18. Interacts with mia40. Requires [2Fe-2S] cluster as cofactor. [4Fe-4S] cluster serves as cofactor.

It is found in the cytoplasm. It localises to the mitochondrion intermembrane space. Functionally, component of the cytosolic iron-sulfur (Fe-S) protein assembly (CIA) machinery required for the maturation of extramitochondrial Fe-S proteins. Part of an electron transfer chain functioning in an early step of cytosolic Fe-S biogenesis, facilitating the de novo assembly of a [4Fe-4S] cluster on the scaffold complex cfd1-nbp35. Electrons are transferred to dre2 from NADPH via the FAD- and FMN-containing protein tah18. Tah18-dre2 are also required for the assembly of the diferric tyrosyl radical cofactor of ribonucleotide reductase (RNR), probably by providing electrons for reduction during radical cofactor maturation in the catalytic small subunit rnr2. This Talaromyces stipitatus (strain ATCC 10500 / CBS 375.48 / QM 6759 / NRRL 1006) (Penicillium stipitatum) protein is Fe-S cluster assembly protein dre2.